A 228-amino-acid polypeptide reads, in one-letter code: MTMIIRKYFSGIPTIGVLALTTEEITLLPIFLDKDDVNEVSEVLETKCLQTNIGGSSLVGSLSVANKYGLLLPKIVEDEELDRIKNFLKENNLDLNVEIIKSKNTALGNLILTNDKGALISPELKDFKKDIEDSLNVEVEIGTIAELPTVGSNAVVTNKGCLTHPLVEDDELEFLKSLFKVEYIGKGTANKGTTSVGACIIANSKGAVVGGDTTGPELLIIEDALGLI.

Functionally, binds to the 50S ribosomal subunit and prevents its association with the 30S ribosomal subunit to form the 70S initiation complex. The protein is Translation initiation factor 6 of Methanocaldococcus jannaschii (strain ATCC 43067 / DSM 2661 / JAL-1 / JCM 10045 / NBRC 100440) (Methanococcus jannaschii).